The following is a 170-amino-acid chain: MLQPHLVIGSAFTFGDAFFTLFAFAILLVLIRIYAWKPLMGVMKEREEHIGSEIDAAEESRAQAEQLLAEQKSVLQQARVESQTMIENAKQLGEKEREEIVKTARRESERIKEEAKTDIAREKEDAISALREQVGSLSVLIASKVIEKNLDEKEQSNLIQDYIERLGDDK.

The chain crosses the membrane as a helical span at residues 11–31 (AFTFGDAFFTLFAFAILLVLI).

Belongs to the ATPase B chain family. As to quaternary structure, F-type ATPases have 2 components, F(1) - the catalytic core - and F(0) - the membrane proton channel. F(1) has five subunits: alpha(3), beta(3), gamma(1), delta(1), epsilon(1). F(0) has three main subunits: a(1), b(2) and c(10-14). The alpha and beta chains form an alternating ring which encloses part of the gamma chain. F(1) is attached to F(0) by a central stalk formed by the gamma and epsilon chains, while a peripheral stalk is formed by the delta and b chains.

It localises to the cell membrane. In terms of biological role, f(1)F(0) ATP synthase produces ATP from ADP in the presence of a proton or sodium gradient. F-type ATPases consist of two structural domains, F(1) containing the extramembraneous catalytic core and F(0) containing the membrane proton channel, linked together by a central stalk and a peripheral stalk. During catalysis, ATP synthesis in the catalytic domain of F(1) is coupled via a rotary mechanism of the central stalk subunits to proton translocation. Functionally, component of the F(0) channel, it forms part of the peripheral stalk, linking F(1) to F(0). The polypeptide is ATP synthase subunit b (Listeria welshimeri serovar 6b (strain ATCC 35897 / DSM 20650 / CCUG 15529 / CIP 8149 / NCTC 11857 / SLCC 5334 / V8)).